Here is a 103-residue protein sequence, read N- to C-terminus: Large ribosomal subunit protein bL21 (103 aa).

The protein belongs to the bacterial ribosomal protein bL21 family. Part of the 50S ribosomal subunit. Contacts protein L20.

Its function is as follows. This protein binds to 23S rRNA in the presence of protein L20. In Shewanella sediminis (strain HAW-EB3), this protein is Large ribosomal subunit protein bL21.